The primary structure comprises 350 residues: MTNLQTFELPTEVTGCAADISLGRALIQAWQKDGIFQIKTDSEQDRKTQEAMAASKQFCKEPLTFKSSCVSDLTYSGYVASGEEVTAGKPDFPEIFTVCKDLSVGDQRVKAGWPCHGPVPWPNNTYQKSMKTFMEELGLAGERLLKLTALGFELPINTFTDLTRDGWHHMRVLRFPPQTSTLSRGIGAHTDYGLLVIAAQDDVGGLYIRPPVEGEKRNRNWLPGESSAGMFEHDEPWTFVTPTPGVWTVFPGDILQFMTGGQLLSTPHKVKLNTRERFACAYFHEPNFEASAYPLFEPSANERIHYGEHFTNMFMRCYPDRITTQSINKENRLAHLEDLKKYSDTRATGS.

The region spanning 166–286 is the Fe2OG dioxygenase domain; that stretch reads GWHHMRVLRF…RFACAYFHEP (121 aa). Residues His-189 and His-268 each coordinate Fe cation.

The protein belongs to the iron/ascorbate-dependent oxidoreductase family. As to quaternary structure, monomer. It depends on Fe(2+) as a cofactor.

It carries out the reaction 2-oxoglutarate + O2 + 2 H(+) = ethene + 3 CO2 + H2O. The catalysed reaction is L-arginine + 2-oxoglutarate + O2 = guanidine + L-glutamate 5-semialdehyde + succinate + CO2. It functions in the pathway alkene biosynthesis; ethylene biosynthesis via 2-oxoglutarate. In terms of biological role, simultaneously catalyzes two reactions, namely formation of ethylene and of succinate from 2-oxoglutarate. The sequence is that of 2-oxoglutarate-dependent ethylene/succinate-forming enzyme (efe) from Pseudomonas amygdali pv. sesami (Pseudomonas syringae pv. sesami).